The sequence spans 233 residues: Large ribosomal subunit protein eL6z (233 aa).

Positions Glu175 to Gln195 are disordered.

This sequence belongs to the eukaryotic ribosomal protein eL6 family.

In Arabidopsis thaliana (Mouse-ear cress), this protein is Large ribosomal subunit protein eL6z (RPL6A).